The sequence spans 412 residues: Argininosuccinate synthase (412 aa).

Residues 20-28 (AYSGGLDTS) and Ala48 contribute to the ATP site. L-citrulline is bound by residues Tyr100 and Ser105. Residue Gly130 participates in ATP binding. Positions 132, 136, and 137 each coordinate L-aspartate. Asn136 contributes to the L-citrulline binding site. L-citrulline-binding residues include Arg140, Ser189, Ser198, Glu274, and Tyr286.

Belongs to the argininosuccinate synthase family. Type 1 subfamily. In terms of assembly, homotetramer.

The protein localises to the cytoplasm. The catalysed reaction is L-citrulline + L-aspartate + ATP = 2-(N(omega)-L-arginino)succinate + AMP + diphosphate + H(+). It participates in amino-acid biosynthesis; L-arginine biosynthesis; L-arginine from L-ornithine and carbamoyl phosphate: step 2/3. In Shewanella halifaxensis (strain HAW-EB4), this protein is Argininosuccinate synthase.